A 161-amino-acid polypeptide reads, in one-letter code: Cytochrome c-type biogenesis protein CcmE (161 aa).

At 1–8 (MNARRKKR) the chain is on the cytoplasmic side. Residues 9–29 (LALATALIGGVAAIASLLLYA) traverse the membrane as a helical; Signal-anchor for type II membrane protein segment. Residues 30–161 (LNSNLNLFYT…DYNAEQKSGY (132 aa)) lie on the Periplasmic side of the membrane. The heme site is built by His-131 and Tyr-135.

It belongs to the CcmE/CycJ family.

It localises to the cell inner membrane. Functionally, heme chaperone required for the biogenesis of c-type cytochromes. Transiently binds heme delivered by CcmC and transfers the heme to apo-cytochromes in a process facilitated by CcmF and CcmH. In Shewanella woodyi (strain ATCC 51908 / MS32), this protein is Cytochrome c-type biogenesis protein CcmE.